The chain runs to 161 residues: RNA pyrophosphohydrolase (161 aa).

Residues 6–149 (GYRPNVGIIL…KKDVYRRALK (144 aa)) enclose the Nudix hydrolase domain. A Nudix box motif is present at residues 38–59 (GGIKSDETPEEALFRELKEEVG).

This sequence belongs to the Nudix hydrolase family. RppH subfamily. It depends on a divalent metal cation as a cofactor.

Accelerates the degradation of transcripts by removing pyrophosphate from the 5'-end of triphosphorylated RNA, leading to a more labile monophosphorylated state that can stimulate subsequent ribonuclease cleavage. This chain is RNA pyrophosphohydrolase, found in Marinomonas sp. (strain MWYL1).